Consider the following 137-residue polypeptide: Ribosome-binding factor A (137 aa).

It belongs to the RbfA family. In terms of assembly, monomer. Binds 30S ribosomal subunits, but not 50S ribosomal subunits or 70S ribosomes.

The protein localises to the cytoplasm. Functionally, one of several proteins that assist in the late maturation steps of the functional core of the 30S ribosomal subunit. Associates with free 30S ribosomal subunits (but not with 30S subunits that are part of 70S ribosomes or polysomes). Required for efficient processing of 16S rRNA. May interact with the 5'-terminal helix region of 16S rRNA. This Allorhizobium ampelinum (strain ATCC BAA-846 / DSM 112012 / S4) (Agrobacterium vitis (strain S4)) protein is Ribosome-binding factor A.